The primary structure comprises 231 residues: Phosphoglycolate phosphatase (231 aa).

Aspartate 9 serves as the catalytic Nucleophile. Residues aspartate 9 and aspartate 11 each contribute to the Mg(2+) site. Position 154 (lysine 154) interacts with substrate. Positions 177 and 181 each coordinate Mg(2+).

The protein belongs to the archaeal SPP-like hydrolase family. Mg(2+) is required as a cofactor.

The enzyme catalyses 2-phosphoglycolate + H2O = glycolate + phosphate. Its function is as follows. Catalyzes the dephosphorylation of 2-phosphoglycolate. This Nitrosopumilus maritimus (strain SCM1) protein is Phosphoglycolate phosphatase.